A 1078-amino-acid chain; its full sequence is Disheveled-associated activator of morphogenesis 1 (1078 aa).

A Phosphoserine modification is found at Ser-34. Residues 45 to 420 (LPMPPVEELD…QIVIQNDKGQ (376 aa)) form the GBD/FH3 domain. A coiled-coil region spans residues 437–526 (RMLVNENEVK…ELSRRAVCAS (90 aa)). 2 disordered regions span residues 456-480 (RKEH…TQEK) and 524-585 (CASI…PLGA). One can recognise an FH1 domain in the interval 528 to 599 (PGGPSPGAPG…PGAPMGLALK (72 aa)). Pro residues-rich tracts occupy residues 530–539 (GPSPGAPGGP) and 548–585 (LLPP…PLGA). Residues 600–1009 (KKSIPQPTNA…EERRARMEAQ (410 aa)) enclose the FH2 domain. Positions 693–702 (AQNCNILLSR) are actin-binding. The segment covering 987–1027 (KQENENMRKKKEEEERRARMEAQLKEQRERERKMRKAKENS) has biased composition (basic and acidic residues). 2 disordered regions span residues 987–1034 (KQEN…GEFD) and 1055–1078 (RNRK…KLNF). A phosphoserine mark is found at Ser-1027 and Ser-1030. Residues 1027 to 1058 (SEESGEFDDLVSALRSGEVFDKDLSKLKRNRK) enclose the DAD domain. Residues 1067 to 1078 (SSRERPITKLNF) show a composition bias toward basic and acidic residues.

The protein belongs to the formin homology family. Homodimer. Interacts with CIP4, FNBP1 and FNBP1L. Interacts with the SH3 domains of Abl, BTK, endophilin, spectrin and SRC. Binds specifically to GTP-bound CDC42 and RHOA. Interacts with INTU; INTU mediates the indirect interaction between DAAM1 and NPHP4. Interacts (via coiled coil domain) with KANK1 (via coiled coil domain). As to expression, expressed in all tissues examined.

It is found in the cytoplasm. It localises to the cytoskeleton. The protein resides in the cilium basal body. In terms of biological role, binds to disheveled (Dvl) and Rho, and mediates Wnt-induced Dvl-Rho complex formation. May play a role as a scaffolding protein to recruit Rho-GDP and Rho-GEF, thereby enhancing Rho-GTP formation. Can direct nucleation and elongation of new actin filaments. Involved in building functional cilia. Involved in the organization of the subapical actin network in multiciliated epithelial cells. Together with DAAM2, required for myocardial maturation and sarcomere assembly. During cell division, may regulate RHOA activation that signals spindle orientation and chromosomal segregation. The sequence is that of Disheveled-associated activator of morphogenesis 1 (DAAM1) from Homo sapiens (Human).